Here is a 356-residue protein sequence, read N- to C-terminus: Putative KilA-N domain-containing protein R878 (356 aa).

The span at 1–12 (MKVRKSNNKPLK) shows a compositional bias: basic residues. A disordered region spans residues 1–114 (MKVRKSNNKP…DDDGSDNNVY (114 aa)). The span at 14-46 (SASFTSGTKTGSKSAKSVNSGSKSMKSTKSSSK) shows a compositional bias: low complexity. Acidic residues predominate over residues 66-114 (SDNDELSDNEISDNESSDDDEISDNESSDDDEISDNEISDDDGSDNNVY). Residues 130–239 (NYSKGKFGNF…VRIGFCMEEW (110 aa)) form the KilA-N domain.

This is Putative KilA-N domain-containing protein R878 from Acanthamoeba polyphaga (Amoeba).